Here is a 331-residue protein sequence, read N- to C-terminus: MKIIAYGIRDDEKPYLDEWVTKNHIEVKAVPDLLDSSNIDLAKDYDGVVAYQQKPYTADLFDKMHEFGIHAFSLRNVGLDNVPADALKKNDIKISNVPAYSPRAIAELSVTQLLALLRKIPEFEYKMAHGDYRWEPDIGLELNQMTVGVIGTGRIGRAAIDIFKPFGAKVIAYDVFRNPALEKEGMYVDTLEELYQQANVITLHVPALKDNYHMLDEKAFGQMQDGTFILNFARGTLVDTPALLKALDSGKVAGAALDTYENEVGIFDVDHGDQPIDDPVFNDLMSRRNVMITPHAAFYTRPAVKNMVQIALDNNRDLIEKNSSKNEVKFE.

NAD(+) contacts are provided by residues 154 to 155, Asp174, 205 to 206, Asn211, 232 to 234, and Asp258; these read RI, VP, and FAR. The active site involves Arg234. Glu263 is a catalytic residue. Catalysis depends on His295, which acts as the Proton donor.

It belongs to the D-isomer specific 2-hydroxyacid dehydrogenase family. As to quaternary structure, homodimer.

It catalyses the reaction (R)-lactate + NAD(+) = pyruvate + NADH + H(+). It carries out the reaction (R)-glycerate + NAD(+) = 3-hydroxypyruvate + NADH + H(+). In terms of biological role, has both D-lactate and D-glycerate dehydrogenase activities. Equally active on pyruvate and hydroxypyruvate. The chain is D-lactate/D-glycerate dehydrogenase from Pediococcus acidilactici.